The primary structure comprises 267 residues: L-aspartate dehydrogenase (267 aa).

Residues alanine 124 and asparagine 190 each coordinate NAD(+). Histidine 218 is an active-site residue.

The protein belongs to the L-aspartate dehydrogenase family.

It carries out the reaction L-aspartate + NADP(+) + H2O = oxaloacetate + NH4(+) + NADPH + H(+). The enzyme catalyses L-aspartate + NAD(+) + H2O = oxaloacetate + NH4(+) + NADH + H(+). Its pathway is cofactor biosynthesis; NAD(+) biosynthesis; iminoaspartate from L-aspartate (dehydrogenase route): step 1/1. Its function is as follows. Specifically catalyzes the NAD or NADP-dependent dehydrogenation of L-aspartate to iminoaspartate. The sequence is that of L-aspartate dehydrogenase from Methanococcus maripaludis (strain C5 / ATCC BAA-1333).